Consider the following 173-residue polypeptide: MGSVNSRGHKAQVVMLGLDCAGKTTILYKLKGNRLVDTLPTVGFNVEPLEAPGHVSLTLWDIGGQTQLRATWKDYLEGIDLLVYVLDSTDEARLPEAVAELEEVLEDPNMAGVPFLVLANKQEAPDALPLLEIRNRLDLERFQDHCWELRACSALTGQGLQEARQSLLHLLRS.

Gly2 is lipidated: N-myristoyl glycine. GTP is bound by residues 17 to 24, 61 to 65, and 120 to 123; these read GLDCAGKT, DIGGQ, and NKQE.

Belongs to the small GTPase superfamily. Arf family.

Its function is as follows. May play a role in apoptosis. May act as a tumor suppressor. This is ADP-ribosylation factor-like protein 11 (Arl11) from Rattus norvegicus (Rat).